We begin with the raw amino-acid sequence, 226 residues long: Enolase-phosphatase E1 (226 aa).

Belongs to the HAD-like hydrolase superfamily. MasA/MtnC family. In terms of assembly, monomer. It depends on Mg(2+) as a cofactor.

The enzyme catalyses 5-methylsulfanyl-2,3-dioxopentyl phosphate + H2O = 1,2-dihydroxy-5-(methylsulfanyl)pent-1-en-3-one + phosphate. Its pathway is amino-acid biosynthesis; L-methionine biosynthesis via salvage pathway; L-methionine from S-methyl-5-thio-alpha-D-ribose 1-phosphate: step 3/6. The protein operates within amino-acid biosynthesis; L-methionine biosynthesis via salvage pathway; L-methionine from S-methyl-5-thio-alpha-D-ribose 1-phosphate: step 4/6. In terms of biological role, bifunctional enzyme that catalyzes the enolization of 2,3-diketo-5-methylthiopentyl-1-phosphate (DK-MTP-1-P) into the intermediate 2-hydroxy-3-keto-5-methylthiopentenyl-1-phosphate (HK-MTPenyl-1-P), which is then dephosphorylated to form the acireductone 1,2-dihydroxy-3-keto-5-methylthiopentene (DHK-MTPene). The chain is Enolase-phosphatase E1 from Shewanella putrefaciens (strain CN-32 / ATCC BAA-453).